The sequence spans 253 residues: Matrix protein (253 aa).

Residues 1–26 (MLSRIKQGIKTKRSSSSSSSRSKTGD) are disordered. The short motif at 55–58 (PTAP) is the PTAP/PSAP motif element.

As to quaternary structure, homomultimer. Interacts with viral nucleocapsid. Interacts with host TSG101.

The protein localises to the virion membrane. Its subcellular location is the host endomembrane system. It localises to the host nucleus membrane. Its function is as follows. Plays a major role in assembly and budding of virion, by recruiting cellular partners of the ESCRT complexes that play a key role in releasing the budding particle from the host membrane. Condensates the ribonucleocapsid core during virus assembly. This Bos taurus (Bovine) protein is Matrix protein (M).